We begin with the raw amino-acid sequence, 546 residues long: FAD-dependent monooxygenase (546 aa).

The first 17 residues, 1 to 17 (MYDVIVVGAGWCGLAAA), serve as a signal peptide directing secretion. Ile106 is an FAD binding site. 2 N-linked (GlcNAc...) asparagine glycosylation sites follow: Asn239 and Asn343.

It belongs to the FAD-binding monooxygenase family. Requires FAD as cofactor.

The protein operates within antifungal biosynthesis. Its function is as follows. FAD-dependent monooxygenase; part of the gene cluster that mediates the biosynthesis of the tetrahydropyranyl antifungal agent lanomycin that acts as an inhibitor of CYP51 and blocks the ergosterol biosynthesis. The biosynthesis probably begins with the formation of an hexaketide, followed by methionine mediated alkylation of C-2 and C-6, and methylation of the reduced C-3 oxygen, pyran forming reductive ring closure, oxygenation of C-4, beta-keto reduction, enoyl reduction and dehydration of the remaining oxygens, and finally, acylation with glycine to complete the biosynthesis. The polypeptide is FAD-dependent monooxygenase (Pyrenophora dematioidea (Helminthosporium dematioideum)).